We begin with the raw amino-acid sequence, 272 residues long: Phosphoglycolate phosphatase (272 aa).

The Nucleophile role is filled by D19. D19, D21, and D182 together coordinate Mg(2+).

It belongs to the HAD-like hydrolase superfamily. CbbY/CbbZ/Gph/YieH family. Mg(2+) serves as cofactor.

The enzyme catalyses 2-phosphoglycolate + H2O = glycolate + phosphate. The protein operates within organic acid metabolism; glycolate biosynthesis; glycolate from 2-phosphoglycolate: step 1/1. Functionally, specifically catalyzes the dephosphorylation of 2-phosphoglycolate. Is involved in the dissimilation of the intracellular 2-phosphoglycolate formed during the DNA repair of 3'-phosphoglycolate ends, a major class of DNA lesions induced by oxidative stress. This is Phosphoglycolate phosphatase from Pseudomonas fluorescens (strain ATCC BAA-477 / NRRL B-23932 / Pf-5).